The sequence spans 273 residues: MSADALKDVIGGGKDLYALLEVSISSPEELEAVDAAQLRAQFRRLALRYHPDKRRDDTQQNDKFVSVQKAYDILSNSSLRATYNRWLSCRLFGDPERRRLVRELHQREQLQVRQKEPMDKDIQNIQSYGQLLRKMRHLRIPYGDWRPNTSISRDSTLVETCTLRLLLRQNSTTNSKSSMLQLFQRAKLHIVDLYFSSRNVDTENDLVLYAVMPDVDTMLDLLNNWAVKPPLSEHILQVQPRVHTDYFHFKTDISLDKTITEAIDADNQYMSSF.

Residues 15-87 (DLYALLEVSI…SLRATYNRWL (73 aa)) enclose the J domain.

The protein belongs to the DnaJ family. Associated with the spliceosome.

Its subcellular location is the cytoplasm. It localises to the nucleus. In terms of biological role, involved in pre-mRNA splicing. May be involved in endoplasmic reticulum-associated protein degradation (ERAD) and required for growth at low and high temperatures. This chain is Pre-mRNA-splicing factor CWC23 (CWC23), found in Eremothecium gossypii (strain ATCC 10895 / CBS 109.51 / FGSC 9923 / NRRL Y-1056) (Yeast).